The primary structure comprises 501 residues: Glycerol kinase (501 aa).

Thr-12 provides a ligand contact to ADP. ATP-binding residues include Thr-12, Thr-13, and Ser-14. A sn-glycerol 3-phosphate-binding site is contributed by Thr-12. Residue Arg-16 participates in ADP binding. Sn-glycerol 3-phosphate-binding residues include Arg-82, Glu-83, Tyr-135, and Asp-244. Arg-82, Glu-83, Tyr-135, Asp-244, and Gln-245 together coordinate glycerol. ADP-binding residues include Thr-266, Gly-309, Gly-409, and Asn-413. Positions 266, 309, and 409 each coordinate ATP.

This sequence belongs to the FGGY kinase family.

The enzyme catalyses glycerol + ATP = sn-glycerol 3-phosphate + ADP + H(+). The protein operates within polyol metabolism; glycerol degradation via glycerol kinase pathway; sn-glycerol 3-phosphate from glycerol: step 1/1. With respect to regulation, inhibited by fructose 1,6-bisphosphate (FBP). Its function is as follows. Key enzyme in the regulation of glycerol uptake and metabolism. Catalyzes the phosphorylation of glycerol to yield sn-glycerol 3-phosphate. This chain is Glycerol kinase, found in Coxiella burnetii (strain RSA 331 / Henzerling II).